Here is a 59-residue protein sequence, read N- to C-terminus: Cecropin-A2 (59 aa).

The first 23 residues, 1–23 (MNFNKLFAIVLLAALVLLGQTEA), serve as a signal peptide directing secretion.

Belongs to the cecropin family.

The protein resides in the secreted. Its function is as follows. Cecropins have lytic and antibacterial activity against several Gram-positive and Gram-negative bacteria. The protein is Cecropin-A2 (CECA2) of Aedes albopictus (Asian tiger mosquito).